The following is an 84-amino-acid chain: UPF0473 protein CLJ_B2791 (84 aa).

The protein belongs to the UPF0473 family.

The sequence is that of UPF0473 protein CLJ_B2791 from Clostridium botulinum (strain 657 / Type Ba4).